Consider the following 528-residue polypeptide: MSICEKSLHWADKVAHKIIKERADCDQYTCASGITPSGTVHIGNFREIISVDLVVRALRDQGKSVRFVHSWDDYDVFRRIPDNVPAQDELKQYIRMPITSVPDPFQQEDSYARHHEREIESALPEVGIYPEYVYQSKQYQAGVYAQEIKIALDNRHRIQAILNEYRDEQHKISGTYWPVSVFCTACHKDCTTVDAWDSHWCLQYHCECGHGEQVDLRQTSAVKLSWRVDWAMRWSKEHVVFEPAGKDHHSQGGSFDTARLISDHIYHWPAPVSFRYDFIGLKGLPGKMSSSAGKVVGLRDVLEVYQPEVLRYLFVSTRPNTEFSISFDLDVLKIYEDYDKSERVAWGIHAAKSEHEFMRHKRIYELSQVRGMPPCISYQVPFRHVCNILQINSGDISAVLAFFSDIHKDQIERFVRRCQCAWNWIRDAGAPDDFKFTLKEDGVRVPLSAEITEALRLIRDTLVPRTDVLSEKELSAELYAVARQIPVGSKELFTALYQVLIGKNQGPRLAGFMKVIGTQRLHRMLSVY.

Positions 36-44 (PSGTVHIGN) match the 'HIGH' region motif. The short motif at 287 to 291 (KMSSS) is the 'KMSKS' region element.

Belongs to the class-I aminoacyl-tRNA synthetase family.

It localises to the cytoplasm. The enzyme catalyses tRNA(Lys) + L-lysine + ATP = L-lysyl-tRNA(Lys) + AMP + diphosphate. The chain is Lysine--tRNA ligase (lysS) from Treponema pallidum (strain Nichols).